A 767-amino-acid chain; its full sequence is General transcription and DNA repair factor IIH helicase/translocase subunit XPB1 (767 aa).

Residues 1–51 form a disordered region; sequence MGNGERGRPNKKMKYGGKDDQKMKNIQNAEDYYDDADEDSRDGEGEEKKRD. Residues 31–41 are compositionally biased toward acidic residues; sequence DYYDDADEDSR. Basic and acidic residues predominate over residues 42 to 51; the sequence is DGEGEEKKRD. A Helicase ATP-binding domain is found at 293-455; sequence MFGNGRARSG…DLNFLIGPKL (163 aa). 306 to 313 contributes to the ATP binding site; sequence LPCGAGKS. The short motif at 408 to 411 is the DEVH box element; that stretch reads DEVH. The 167-residue stretch at 510-676 folds into the Helicase C-terminal domain; the sequence is RACEFLIRFH…SLPPPDAGSS (167 aa). The tract at residues 742-767 is disordered; that stretch reads RHKSGQQFKKPKDPTKRHNLFKKRYV. The Nuclear localization signal signature appears at 750 to 766; sequence KKPKDPTKRHNLFKKRY. The span at 758-767 shows a compositional bias: basic residues; the sequence is RHNLFKKRYV.

It belongs to the helicase family. RAD25/XPB subfamily. Component of the 7-subunit TFIIH core complex composed of XPB, XPD, TFB1/GTF2H1, GTF2H2/P44, TFB4/GTF2H3, TFB2/GTF2H4 and TFB5/GTF2H5, which is active in NER. The core complex associates with the 3-subunit CDK-activating kinase (CAK) module composed of CYCH1/cyclin H1, CDKD and MAT1/At4g30820 to form the 10-subunit holoenzyme (holo-TFIIH) active in transcription. In terms of tissue distribution, expressed ubiquitously.

Its subcellular location is the nucleus. It catalyses the reaction Couples ATP hydrolysis with the unwinding of duplex DNA by translocating in the 3'-5' direction.. The catalysed reaction is ATP + H2O = ADP + phosphate + H(+). In terms of biological role, ATP-dependent 3'-5' DNA helicase/translocase; binds dsDNA rather than ssDNA, unzipping it in a translocase rather than classical helicase activity. Component of the general transcription and DNA repair factor IIH (TFIIH) core complex. When complexed to CDK-activating kinase (CAK), involved in RNA transcription by RNA polymerase II. The ATPase activity of XPB/ERCC3, but not its helicase activity, is required for DNA opening; it may wrap around the damaged DNA wedging it open, causing localized melting and twisting that allows XPD/ERCC2 helicase to anchor. The ATP-dependent helicase activity of XPB/ERCC3 may be required for promoter escape. Also involved in transcription-coupled nucleotide excision repair (NER) of damaged DNA. In NER, TFIIH acts by opening DNA around the lesion to allow the excision of the damaged oligonucleotide and its replacement by a new DNA fragment. The structure of the TFIIH transcription complex differs from the NER-TFIIH complex. Partially complements UV sensitivity of a yeast SSL2 mutation. Required during the early stages of development, including seed germination. This Arabidopsis thaliana (Mouse-ear cress) protein is General transcription and DNA repair factor IIH helicase/translocase subunit XPB1 (XPB1).